The sequence spans 396 residues: Acetate kinase (396 aa).

A Mg(2+)-binding site is contributed by Asn-8. ATP is bound at residue Lys-15. Substrate is bound at residue Arg-89. Residue Asp-146 is the Proton donor/acceptor of the active site. ATP contacts are provided by residues 206–210, 280–282, and 328–332; these read HLGNG, DMR, and GVGEN. Glu-382 lines the Mg(2+) pocket.

This sequence belongs to the acetokinase family. Homodimer. Mg(2+) is required as a cofactor. Mn(2+) serves as cofactor.

The protein resides in the cytoplasm. It catalyses the reaction acetate + ATP = acetyl phosphate + ADP. The protein operates within metabolic intermediate biosynthesis; acetyl-CoA biosynthesis; acetyl-CoA from acetate: step 1/2. Its function is as follows. Catalyzes the formation of acetyl phosphate from acetate and ATP. Can also catalyze the reverse reaction. This is Acetate kinase from Clavibacter sepedonicus (Clavibacter michiganensis subsp. sepedonicus).